The chain runs to 432 residues: D-amino acid dehydrogenase (432 aa).

3–17 (VLVLGGGVIGVTSAY) lines the FAD pocket.

This sequence belongs to the DadA oxidoreductase family. FAD is required as a cofactor.

It catalyses the reaction a D-alpha-amino acid + A + H2O = a 2-oxocarboxylate + AH2 + NH4(+). It participates in amino-acid degradation; D-alanine degradation; NH(3) and pyruvate from D-alanine: step 1/1. Its function is as follows. Oxidative deamination of D-amino acids. This Delftia acidovorans (strain DSM 14801 / SPH-1) protein is D-amino acid dehydrogenase.